The primary structure comprises 527 residues: Estrogen receptor beta (527 aa).

Positions methionine 1 to phenylalanine 145 are modulating. Residues serine 84 and serine 102 each carry the phosphoserine; by MAPK modification. NR C4-type zinc fingers lie at residues cysteine 146–cysteine 166 and cysteine 182–cysteine 206. A DNA-binding region (nuclear receptor) is located at residues cysteine 146–methionine 211. One can recognise an NR LBD domain in the interval serine 261–histidine 495.

Belongs to the nuclear hormone receptor family. NR3 subfamily. Binds DNA as a homodimer. Can form a heterodimer with ESR1. Interacts with NCOA1, NCOA3, NCOA5 and NCOA6 coactivators, leading to a strong increase of transcription of target genes. Interacts with UBE1C and AKAP13. Interacts with DNTTIP2. Interacts with CCDC62 in the presence of estradiol/E2; this interaction seems to enhance the transcription of target genes. Interacts with DNAAF4. Interacts with PRMT2. Interacts with CCAR2 (via N-terminus) in a ligand-independent manner. Interacts with RBM39, in the presence of estradiol (E2). Interacts with STUB1/CHIP. Post-translationally, phosphorylation at Ser-84 and Ser-102 recruits NCOA1. Present in granulosa cells of antral follicles in various stages of follicular growth.

It localises to the nucleus. Functionally, nuclear hormone receptor. Binds estrogens with an affinity similar to that of ESR1ESR1/ER-alpha, and activates expression of reporter genes containing estrogen response elements (ERE) in an estrogen-dependent manner. This is Estrogen receptor beta (ESR2) from Bos taurus (Bovine).